A 255-amino-acid polypeptide reads, in one-letter code: Indole-3-glycerol phosphate synthase (255 aa).

The protein belongs to the TrpC family.

The enzyme catalyses 1-(2-carboxyphenylamino)-1-deoxy-D-ribulose 5-phosphate + H(+) = (1S,2R)-1-C-(indol-3-yl)glycerol 3-phosphate + CO2 + H2O. The protein operates within amino-acid biosynthesis; L-tryptophan biosynthesis; L-tryptophan from chorismate: step 4/5. The protein is Indole-3-glycerol phosphate synthase of Streptococcus mutans serotype c (strain ATCC 700610 / UA159).